The primary structure comprises 182 residues: UPF0301 protein CHU_1773 (182 aa).

The protein belongs to the UPF0301 (AlgH) family.

The protein is UPF0301 protein CHU_1773 of Cytophaga hutchinsonii (strain ATCC 33406 / DSM 1761 / CIP 103989 / NBRC 15051 / NCIMB 9469 / D465).